Reading from the N-terminus, the 56-residue chain is Repressor-like protein SSo7c4 (56 aa).

Residues 4–51 (EEIVKVSRNYQVTIPAKVRQKFQIKEGDLVKVTFDESGGVVKIQLLDS) form the SpoVT-AbrB domain.

This Saccharolobus solfataricus (strain ATCC 35092 / DSM 1617 / JCM 11322 / P2) (Sulfolobus solfataricus) protein is Repressor-like protein SSo7c4.